A 255-amino-acid polypeptide reads, in one-letter code: Cytosolic Fe-S cluster assembly factor Nubp2 homolog (255 aa).

ATP is bound at residue 14-21 (GKGGVGKS). [4Fe-4S] cluster contacts are provided by Cys185 and Cys188.

It belongs to the Mrp/NBP35 ATP-binding proteins family. NUBP2/CFD1 subfamily. Heterotetramer of 2 Nubp1 and 2 Nubp2 chains. Requires [4Fe-4S] cluster as cofactor.

It is found in the cytoplasm. Functionally, component of the cytosolic iron-sulfur (Fe/S) protein assembly (CIA) machinery. Required for maturation of extramitochondrial Fe-S proteins. The Nubp1-Nubp2 heterotetramer forms a Fe-S scaffold complex, mediating the de novo assembly of an Fe-S cluster and its transfer to target apoproteins. The polypeptide is Cytosolic Fe-S cluster assembly factor Nubp2 homolog (Drosophila persimilis (Fruit fly)).